The sequence spans 414 residues: MAISYNHSMSACQKIKTDQAMVRDRLKQSQSLIGLSHDEMVQALRSIGVPEHQTRMRVRQLWHWFYVRGVSSFDEMFNISKPMREMLKDNFSIAYPEIVEEQISKDGTYKWLLRFPARGAGKPVEIETVYIPGEGRGTLCVSSQVGCTLTCSFCYTGTQKLVRNLTAEEILLQLLFARNRLGDFPGKDKPDHSSLSEERRKITNIVMMGMGEPLYNFEAVKKALLIASDGDGLSLSKRRITLSTSGVVPEIIRAGEEIGVMLAVSLHAVCDSLRDVLVPINKKYPLSMLMEACRNYPGLSNAKRITFEYVMLKDVNDSLDDAKKLIKLLKGIPAKINLIPFNPWPGSHYECSDWEQIERFADVINRAGYASPIRMPRGRDILAACGNLKSTSERLRKSERLQLESMMGDDLSSI.

Catalysis depends on Glu-127, which acts as the Proton acceptor. Residues 133–380 form the Radical SAM core domain; sequence GEGRGTLCVS…SPIRMPRGRD (248 aa). Cys-140 and Cys-385 are joined by a disulfide. Residues Cys-147, Cys-151, and Cys-154 each coordinate [4Fe-4S] cluster. Residues 211 to 212, Ser-243, 265 to 267, and Asn-342 each bind S-adenosyl-L-methionine; these read GE and SLH. Catalysis depends on Cys-385, which acts as the S-methylcysteine intermediate.

Belongs to the radical SAM superfamily. RlmN family. The cofactor is [4Fe-4S] cluster.

Its subcellular location is the cytoplasm. It carries out the reaction adenosine(2503) in 23S rRNA + 2 reduced [2Fe-2S]-[ferredoxin] + 2 S-adenosyl-L-methionine = 2-methyladenosine(2503) in 23S rRNA + 5'-deoxyadenosine + L-methionine + 2 oxidized [2Fe-2S]-[ferredoxin] + S-adenosyl-L-homocysteine. The catalysed reaction is adenosine(37) in tRNA + 2 reduced [2Fe-2S]-[ferredoxin] + 2 S-adenosyl-L-methionine = 2-methyladenosine(37) in tRNA + 5'-deoxyadenosine + L-methionine + 2 oxidized [2Fe-2S]-[ferredoxin] + S-adenosyl-L-homocysteine. Functionally, specifically methylates position 2 of adenine 2503 in 23S rRNA and position 2 of adenine 37 in tRNAs. m2A2503 modification seems to play a crucial role in the proofreading step occurring at the peptidyl transferase center and thus would serve to optimize ribosomal fidelity. This Bartonella bacilliformis (strain ATCC 35685 / KC583 / Herrer 020/F12,63) protein is Dual-specificity RNA methyltransferase RlmN.